Reading from the N-terminus, the 209-residue chain is Ribosomal RNA large subunit methyltransferase E (209 aa).

Gly-63, Trp-65, Asp-83, Asp-99, and Asp-124 together coordinate S-adenosyl-L-methionine. Lys-164 functions as the Proton acceptor in the catalytic mechanism.

The protein belongs to the class I-like SAM-binding methyltransferase superfamily. RNA methyltransferase RlmE family.

The protein resides in the cytoplasm. The catalysed reaction is uridine(2552) in 23S rRNA + S-adenosyl-L-methionine = 2'-O-methyluridine(2552) in 23S rRNA + S-adenosyl-L-homocysteine + H(+). Its function is as follows. Specifically methylates the uridine in position 2552 of 23S rRNA at the 2'-O position of the ribose in the fully assembled 50S ribosomal subunit. In Tolumonas auensis (strain DSM 9187 / NBRC 110442 / TA 4), this protein is Ribosomal RNA large subunit methyltransferase E.